Here is an 845-residue protein sequence, read N- to C-terminus: Translation initiation factor IF-2 (845 aa).

Basic and acidic residues-rich tracts occupy residues 139 to 198 (EAKR…EKPA) and 206 to 228 (FRSEDRESEQKQRGTKFGRKELH). Residues 139 to 253 (EAKRQAAEEE…PQKAAPAAKH (115 aa)) are disordered. One can recognise a tr-type G domain in the interval 345 to 512 (SRAAVVTIMG…AILLQAEVME (168 aa)). The interval 354–361 (GHVDHGKT) is G1. 354 to 361 (GHVDHGKT) contacts GTP. Residues 379 to 383 (GITQH) are G2. The G3 stretch occupies residues 400 to 403 (DTPG). GTP contacts are provided by residues 400–404 (DTPGH) and 454–457 (NKID). Positions 454-457 (NKID) are G4. A G5 region spans residues 490–492 (SAK).

Belongs to the TRAFAC class translation factor GTPase superfamily. Classic translation factor GTPase family. IF-2 subfamily.

The protein localises to the cytoplasm. Its function is as follows. One of the essential components for the initiation of protein synthesis. Protects formylmethionyl-tRNA from spontaneous hydrolysis and promotes its binding to the 30S ribosomal subunits. Also involved in the hydrolysis of GTP during the formation of the 70S ribosomal complex. In Nitrosococcus oceani (strain ATCC 19707 / BCRC 17464 / JCM 30415 / NCIMB 11848 / C-107), this protein is Translation initiation factor IF-2.